The sequence spans 950 residues: Leucine--tRNA ligase (950 aa).

Residues 41 to 52 carry the 'HIGH' region motif; it reads PYPSGDGLHVGH. The short motif at 718–722 is the 'KMSKS' region element; that stretch reads KMSKS. K721 contributes to the ATP binding site.

It belongs to the class-I aminoacyl-tRNA synthetase family.

It is found in the cytoplasm. The enzyme catalyses tRNA(Leu) + L-leucine + ATP = L-leucyl-tRNA(Leu) + AMP + diphosphate. This chain is Leucine--tRNA ligase, found in Rhodopirellula baltica (strain DSM 10527 / NCIMB 13988 / SH1).